The primary structure comprises 72 residues: Large ribosomal subunit protein uL29 (72 aa).

It belongs to the universal ribosomal protein uL29 family.

The polypeptide is Large ribosomal subunit protein uL29 (Rhodopirellula baltica (strain DSM 10527 / NCIMB 13988 / SH1)).